The sequence spans 206 residues: Small ribosomal subunit protein uS4 (206 aa).

The 62-residue stretch at 96-157 (QRLDNVVYRM…KAKKQARIGA (62 aa)) folds into the S4 RNA-binding domain.

It belongs to the universal ribosomal protein uS4 family. In terms of assembly, part of the 30S ribosomal subunit. Contacts protein S5. The interaction surface between S4 and S5 is involved in control of translational fidelity.

Functionally, one of the primary rRNA binding proteins, it binds directly to 16S rRNA where it nucleates assembly of the body of the 30S subunit. With S5 and S12 plays an important role in translational accuracy. This chain is Small ribosomal subunit protein uS4, found in Idiomarina loihiensis (strain ATCC BAA-735 / DSM 15497 / L2-TR).